The primary structure comprises 472 residues: 3beta,22alpha-dihydroxysteroid 3-dehydrogenase (472 aa).

A helical transmembrane segment spans residues 1 to 21; sequence MAFTAFLLLLSSIAAGFLLLL. Cys-418 is a heme binding site.

The protein belongs to the cytochrome P450 family. Requires heme as cofactor.

Its subcellular location is the membrane. It catalyses the reaction (22S)-22-hydroxycampesterol + reduced [NADPH--hemoprotein reductase] + O2 = (22S)-22-hydroxycampest-4-en-3-one + oxidized [NADPH--hemoprotein reductase] + 2 H2O + H(+). It carries out the reaction 6-deoxoteasterone + reduced [NADPH--hemoprotein reductase] + O2 = 3-dehydro-6-deoxoteasterone + oxidized [NADPH--hemoprotein reductase] + 2 H2O + H(+). The enzyme catalyses 6-deoxycathasterone + reduced [NADPH--hemoprotein reductase] + O2 = (22S,24R)-22-hydroxy-5alpha-ergostan-3-one + oxidized [NADPH--hemoprotein reductase] + 2 H2O + H(+). The catalysed reaction is (22R,23R)-22,23-dihydroxycampesterol + reduced [NADPH--hemoprotein reductase] + O2 = (22R,23R)-22,23-dihydroxycampest-4-en-3-one + oxidized [NADPH--hemoprotein reductase] + 2 H2O + H(+). It functions in the pathway plant hormone biosynthesis; brassinosteroid biosynthesis. Catalyzes C3-oxidation steps in brassinosteroids biosynthesis. Converts (22S)-22-hydroxycampesterol (22-OHCR) to (22S,24R)-22-hydroxyergost-4-en-3-one (22-hydroxy-campesta-4-en-3-one, 22-OH-4-en-3-one), 6-deoxocathasterone (6-deoxoCT) to (22S,24R)-22-hydroxy-5alpha-ergostan-3-one (22-hydroxy-campesta-3-one, 22-OH-3-one), (22R,23R)-22,23-dihydroxycampesterol (22,23-diOHCR) to (22R,23R)-22,23-dihydroxy-campest-4-en-3-one (22,23-diOH-4-en-3-one), and 6-deoxoteasterone (6-deoxoTE) to 3-dehydro-6-deoxoteasterone (6-deoxo3DT, 6-deoxo-3-DHT). This is 3beta,22alpha-dihydroxysteroid 3-dehydrogenase from Arabidopsis thaliana (Mouse-ear cress).